Consider the following 429-residue polypeptide: DNA polymerase delta small subunit (429 aa).

It belongs to the DNA polymerase delta/II small subunit family. In terms of assembly, heterodimer with subunits of 125 kDa and 50 kDa.

Its subcellular location is the nucleus. It catalyses the reaction DNA(n) + a 2'-deoxyribonucleoside 5'-triphosphate = DNA(n+1) + diphosphate. The function of the small subunit is not yet clear. The sequence is that of DNA polymerase delta small subunit (POLD2) from Oryza sativa subsp. japonica (Rice).